The sequence spans 594 residues: Glutamate decarboxylase 1 (594 aa).

Over residues 1–13 (MASSTPSSSATSS) the composition is skewed to low complexity. The interval 1 to 23 (MASSTPSSSATSSNAGADPNTTN) is disordered. At S78 the chain carries Phosphoserine. 190 to 192 (QLS) is a binding site for 4-aminobutanoate. N6-(pyridoxal phosphate)lysine is present on K405. R567 serves as a coordination point for 4-aminobutanoate.

It belongs to the group II decarboxylase family. As to quaternary structure, homodimer. Pyridoxal 5'-phosphate is required as a cofactor.

It carries out the reaction L-glutamate + H(+) = 4-aminobutanoate + CO2. Catalyzes the synthesis of the inhibitory neurotransmitter gamma-aminobutyric acid (GABA) with pyridoxal 5'-phosphate as cofactor. This chain is Glutamate decarboxylase 1 (GAD1), found in Felis catus (Cat).